The primary structure comprises 255 residues: Cysteine protease avirulence protein AvrRpt2 (255 aa).

Residues methionine 1–threonine 50 form a disordered region. The propeptide at methionine 1–glycine 71 is removed in mature form. A determinants of cleavage specificity region spans residues phenylalanine 70–glycine 71. A disordered region spans residues lysine 76–threonine 100. Residues serine 86–aspartate 98 show a composition bias toward low complexity. Cysteine 122 functions as the Nucleophile in the catalytic mechanism. Residues histidine 208 and aspartate 226 contribute to the active site.

Belongs to the peptidase C70 family. As to quaternary structure, interacts physically with plant cell ROC1 (Arabidopsis single-domain cyclophilin) and RIN4. Post-translationally, autocleaved inside plant cells upon activation by cyclophilin. Cleavage is crucial in subcellular location and in eliciting HR. Inhibited by cyclosporin A (cyclophilin inhibitor).

The protein resides in the secreted. Its subcellular location is the host cell membrane. Its function is as follows. Effector protein involved in gene-for-gene resistance in plants expressing RPS2. Its thiol protease activity is required for the degradation of plant cell RIN4 and consequent activation of RPS2 during bacterial infection. The activation of RPS2 is sufficient for the induction of hypersensitive response (HR) and plant resistance. Cleavage of RIN4 by AvrRpt2 also interferes with RPM1-mediated resistance activated by either AvrRpm1 or AvrB. Contributes to virulence in plants lacking the resistance protein RPS2 promoting pathogen growth and disease symptoms. Inhibits PAMP (pathogen-associated molecular patterns)-induced signaling compromising the host's basal defense system. Blocks plant callose deposition, flg22 (a peptide corresponding to the most conserved domain of flagellin) induced accumulation of PR-1, PR-2 and PR-5 and activation of GST6 transcription. The mechanism of virulence is unknown, but this activity is independent of ethylene and salicylic acid response pathways and independent of RIN4 disappearance. This is Cysteine protease avirulence protein AvrRpt2 (avrRpt2) from Pseudomonas syringae pv. tomato.